Reading from the N-terminus, the 359-residue chain is Double-stranded RNA-binding protein 3 (359 aa).

DRBM domains lie at 1 to 70 and 87 to 155; these read MYKN…ALSS and IYKN…SLRK. Basic and acidic residues predominate over residues 266-280; that stretch reads EKKQSLDDPKPEMRI. 2 disordered regions span residues 266–292 and 328–359; these read EKKQ…SSSV and APPP…SLPN. The span at 328-338 shows a compositional bias: pro residues; it reads APPPKPNPNPN.

Binds double-stranded RNA. The sequence is that of Double-stranded RNA-binding protein 3 (DRB3) from Arabidopsis thaliana (Mouse-ear cress).